We begin with the raw amino-acid sequence, 570 residues long: Protein FAM227A (570 aa).

Residues 87 to 99 are compositionally biased toward basic and acidic residues; sequence LREKTRSSPEDKV. 3 disordered regions span residues 87–112, 336–374, and 519–570; these read LREKTRSSPEDKVKRQRKSQYSCKGS, PAQSRKFYHPQSSSANSPSEKTSSAKQNSEKSLRMQNTA, and KAAD…TSKP. Tyr343 carries the phosphotyrosine modification. The segment covering 345-362 has biased composition (polar residues); sequence PQSSSANSPSEKTSSAKQ. Phosphoserine is present on residues Ser348 and Ser349. Composition is skewed to basic and acidic residues over residues 363–374 and 540–562; these read NSEKSLRMQNTA and SPDKKTKEGKGGEGKRRETEVEH.

This sequence belongs to the FAM227 family.

The chain is Protein FAM227A (FAM227A) from Homo sapiens (Human).